Here is a 246-residue protein sequence, read N- to C-terminus: 7-cyano-7-deazaguanine synthase (246 aa).

24 to 34 (FSGGLDSTTVL) is an ATP binding site. Zn(2+) is bound by residues cysteine 209, cysteine 219, cysteine 222, and cysteine 225.

The protein belongs to the QueC family. The cofactor is Zn(2+).

It catalyses the reaction 7-carboxy-7-deazaguanine + NH4(+) + ATP = 7-cyano-7-deazaguanine + ADP + phosphate + H2O + H(+). It participates in purine metabolism; 7-cyano-7-deazaguanine biosynthesis. In terms of biological role, catalyzes the ATP-dependent conversion of 7-carboxy-7-deazaguanine (CDG) to 7-cyano-7-deazaguanine (preQ(0)). This chain is 7-cyano-7-deazaguanine synthase, found in Polynucleobacter asymbioticus (strain DSM 18221 / CIP 109841 / QLW-P1DMWA-1) (Polynucleobacter necessarius subsp. asymbioticus).